Here is a 348-residue protein sequence, read N- to C-terminus: Dihydroorotase (348 aa).

Zn(2+) contacts are provided by His-13 and His-15. Substrate contacts are provided by residues 15-17 (HLR) and Asn-41. Residues Lys-99, His-136, and His-174 each contribute to the Zn(2+) site. N6-carboxylysine is present on Lys-99. Position 136 (His-136) interacts with substrate. Leu-219 is a substrate binding site. Asp-247 contributes to the Zn(2+) binding site. Asp-247 is an active-site residue. Positions 251 and 263 each coordinate substrate.

This sequence belongs to the metallo-dependent hydrolases superfamily. DHOase family. Class II DHOase subfamily. Homodimer. Zn(2+) is required as a cofactor.

It catalyses the reaction (S)-dihydroorotate + H2O = N-carbamoyl-L-aspartate + H(+). It participates in pyrimidine metabolism; UMP biosynthesis via de novo pathway; (S)-dihydroorotate from bicarbonate: step 3/3. In terms of biological role, catalyzes the reversible cyclization of carbamoyl aspartate to dihydroorotate. The sequence is that of Dihydroorotase from Rhizobium etli (strain ATCC 51251 / DSM 11541 / JCM 21823 / NBRC 15573 / CFN 42).